Here is a 341-residue protein sequence, read N- to C-terminus: Anthranilate phosphoribosyltransferase (341 aa).

Residues glycine 80, 83–84 (GD), threonine 88, 90–93 (NIST), 108–116 (KHGNYSVSS), and serine 120 contribute to the 5-phospho-alpha-D-ribose 1-diphosphate site. Glycine 80 is a binding site for anthranilate. Position 92 (serine 92) interacts with Mg(2+). Asparagine 111 is an anthranilate binding site. Arginine 166 is a binding site for anthranilate. The Mg(2+) site is built by aspartate 224 and glutamate 225.

This sequence belongs to the anthranilate phosphoribosyltransferase family. In terms of assembly, homodimer. Mg(2+) serves as cofactor.

It carries out the reaction N-(5-phospho-beta-D-ribosyl)anthranilate + diphosphate = 5-phospho-alpha-D-ribose 1-diphosphate + anthranilate. The protein operates within amino-acid biosynthesis; L-tryptophan biosynthesis; L-tryptophan from chorismate: step 2/5. Its function is as follows. Catalyzes the transfer of the phosphoribosyl group of 5-phosphorylribose-1-pyrophosphate (PRPP) to anthranilate to yield N-(5'-phosphoribosyl)-anthranilate (PRA). The polypeptide is Anthranilate phosphoribosyltransferase (Haloquadratum walsbyi (strain DSM 16790 / HBSQ001)).